The primary structure comprises 526 residues: tRNA (guanine(26)-N(2))-dimethyltransferase (526 aa).

The span at 1–10 (MTENVNSSGD) shows a compositional bias: polar residues. A disordered region spans residues 1–20 (MTENVNSSGDSAIKSEDKEE). Positions 22 to 441 (TVIQEGQAKV…APMHLLWDIY (420 aa)) constitute a Trm1 methyltransferase domain. Positions 47, 104, and 122 each coordinate S-adenosyl-L-methionine. The Zn(2+) site is built by cysteine 286, cysteine 289, cysteine 325, and cysteine 328. A disordered region spans residues 498 to 526 (KGKNWGPRQKAKGSVNSTKAGFQLTEHKE).

The protein belongs to the class I-like SAM-binding methyltransferase superfamily. Trm1 family.

It carries out the reaction guanosine(26) in tRNA + 2 S-adenosyl-L-methionine = N(2)-dimethylguanosine(26) in tRNA + 2 S-adenosyl-L-homocysteine + 2 H(+). In terms of biological role, dimethylates a single guanine residue at position 26 of most tRNAs using S-adenosyl-L-methionine as donor of the methyl groups. The polypeptide is tRNA (guanine(26)-N(2))-dimethyltransferase (trm-1) (Caenorhabditis elegans).